The following is a 134-amino-acid chain: UPF0357 protein YCL012C (134 aa).

Residues 1-23 (MKSLFYLKLLLWVVLLSLCLLMA) form the signal peptide. Phosphoserine occurs at positions 71 and 74. Lys-86 participates in a covalent cross-link: Glycyl lysine isopeptide (Lys-Gly) (interchain with G-Cter in ubiquitin).

This sequence belongs to the UPF0357 family.

The protein is UPF0357 protein YCL012C of Saccharomyces cerevisiae (strain ATCC 204508 / S288c) (Baker's yeast).